The following is a 389-amino-acid chain: Phospho-N-acetylmuramoyl-pentapeptide-transferase (389 aa).

The next 10 membrane-spanning stretches (helical) occupy residues 25-45, 73-93, 97-117, 135-155, 190-210, 222-242, 258-278, 286-306, 311-331, and 366-386; these read RAVM…PWVI, TMGG…WGDL, FIWI…VDDY, FWQS…VSEA, ISYP…IVGA, GLVI…AYVM, GAGE…AFLW, VFMG…VAVI, IVLF…MLQV, and QVVV…LSTL.

The protein belongs to the glycosyltransferase 4 family. MraY subfamily. Mg(2+) serves as cofactor.

Its subcellular location is the cell inner membrane. The enzyme catalyses UDP-N-acetyl-alpha-D-muramoyl-L-alanyl-gamma-D-glutamyl-meso-2,6-diaminopimeloyl-D-alanyl-D-alanine + di-trans,octa-cis-undecaprenyl phosphate = di-trans,octa-cis-undecaprenyl diphospho-N-acetyl-alpha-D-muramoyl-L-alanyl-D-glutamyl-meso-2,6-diaminopimeloyl-D-alanyl-D-alanine + UMP. Its pathway is cell wall biogenesis; peptidoglycan biosynthesis. Functionally, catalyzes the initial step of the lipid cycle reactions in the biosynthesis of the cell wall peptidoglycan: transfers peptidoglycan precursor phospho-MurNAc-pentapeptide from UDP-MurNAc-pentapeptide onto the lipid carrier undecaprenyl phosphate, yielding undecaprenyl-pyrophosphoryl-MurNAc-pentapeptide, known as lipid I. In Burkholderia vietnamiensis (strain G4 / LMG 22486) (Burkholderia cepacia (strain R1808)), this protein is Phospho-N-acetylmuramoyl-pentapeptide-transferase.